Here is a 72-residue protein sequence, read N- to C-terminus: Translation initiation factor IF-1 (72 aa).

The region spanning 1-72 (MAKEEAIEIE…TKGRITYRYK (72 aa)) is the S1-like domain.

The protein belongs to the IF-1 family. Component of the 30S ribosomal translation pre-initiation complex which assembles on the 30S ribosome in the order IF-2 and IF-3, IF-1 and N-formylmethionyl-tRNA(fMet); mRNA recruitment can occur at any time during PIC assembly.

It localises to the cytoplasm. One of the essential components for the initiation of protein synthesis. Stabilizes the binding of IF-2 and IF-3 on the 30S subunit to which N-formylmethionyl-tRNA(fMet) subsequently binds. Helps modulate mRNA selection, yielding the 30S pre-initiation complex (PIC). Upon addition of the 50S ribosomal subunit IF-1, IF-2 and IF-3 are released leaving the mature 70S translation initiation complex. The protein is Translation initiation factor IF-1 of Chlorobium phaeobacteroides (strain DSM 266 / SMG 266 / 2430).